Consider the following 160-residue polypeptide: Thebaine synthase 2 (160 aa).

Position 74 (S74) interacts with thebaine. H89 serves as the catalytic Proton acceptor. T105 provides a ligand contact to thebaine.

Belongs to the MLP family. In terms of assembly, homodimer (allosteric) and oligomers. As to expression, expressed in poppy latex.

It carries out the reaction (7S)-O-acetylsalutaridinol = thebaine + acetate + H(+). It participates in alkaloid biosynthesis; morphine biosynthesis. With respect to regulation, slightly inhibited by salutaridine and (7S)-salutaridinol. Catalyzes the formation of thebaine from (7S)-salutaridinol 7-O-acetate at the expense of labile hydroxylated by-products, which are preferentially produced by spontaneous allylic elimination. No visible activity toward (7S)-salutaridinol (at pH 7). The polypeptide is Thebaine synthase 2 (Papaver somniferum (Opium poppy)).